We begin with the raw amino-acid sequence, 749 residues long: Meiotically up-regulated gene 122 protein (749 aa).

Residues 1–20 (MYRKWDLCITRHLLPYIEHS) are Cytoplasmic-facing. The helical; Signal-anchor for type II membrane protein transmembrane segment at 21-41 (VIPIIALLVLSLIFYILYICF) threads the bilayer. Residues 42–749 (GTTSYILSGI…LLSNALRSII (708 aa)) lie on the Lumenal side of the membrane. Residues 88 to 261 (PPELEAPLQL…CIILYFSSSE (174 aa)) enclose the PXA domain. A PX domain is found at 311–422 (LHYQFLKEAS…KFFAKSMRSH (112 aa)). Disordered regions lie at residues 439–489 (QSSS…LSQQ) and 504–546 (GSCT…PPKP). Composition is skewed to polar residues over residues 440 to 461 (SSSVPTLPNLTNISRVLSNKTS) and 475 to 489 (LSHQSTLAPEPLSQQ).

The protein belongs to the sorting nexin family.

It localises to the endoplasmic reticulum membrane. Its function is as follows. Has a role in meiosis. The protein is Meiotically up-regulated gene 122 protein (mug122) of Schizosaccharomyces pombe (strain 972 / ATCC 24843) (Fission yeast).